We begin with the raw amino-acid sequence, 614 residues long: tRNA uridine 5-carboxymethylaminomethyl modification enzyme MnmG (614 aa).

10 to 15 serves as a coordination point for FAD; sequence GAGHAG. Residue 271 to 285 participates in NAD(+) binding; that stretch reads GPRYCPSIEDKIVKF.

It belongs to the MnmG family. In terms of assembly, homodimer. Heterotetramer of two MnmE and two MnmG subunits. FAD is required as a cofactor.

It localises to the cytoplasm. In terms of biological role, NAD-binding protein involved in the addition of a carboxymethylaminomethyl (cmnm) group at the wobble position (U34) of certain tRNAs, forming tRNA-cmnm(5)s(2)U34. This is tRNA uridine 5-carboxymethylaminomethyl modification enzyme MnmG from Ureaplasma parvum serovar 3 (strain ATCC 27815 / 27 / NCTC 11736).